A 168-amino-acid polypeptide reads, in one-letter code: S-ribosylhomocysteine lyase (168 aa).

Residues H54, H58, and C128 each coordinate Fe cation.

The protein belongs to the LuxS family. In terms of assembly, homodimer. Fe cation is required as a cofactor.

The catalysed reaction is S-(5-deoxy-D-ribos-5-yl)-L-homocysteine = (S)-4,5-dihydroxypentane-2,3-dione + L-homocysteine. Involved in the synthesis of autoinducer 2 (AI-2) which is secreted by bacteria and is used to communicate both the cell density and the metabolic potential of the environment. The regulation of gene expression in response to changes in cell density is called quorum sensing. Catalyzes the transformation of S-ribosylhomocysteine (RHC) to homocysteine (HC) and 4,5-dihydroxy-2,3-pentadione (DPD). This chain is S-ribosylhomocysteine lyase, found in Neisseria meningitidis serogroup A / serotype 4A (strain DSM 15465 / Z2491).